A 104-amino-acid polypeptide reads, in one-letter code: Large ribosomal subunit protein uL24 (104 aa).

Belongs to the universal ribosomal protein uL24 family. In terms of assembly, part of the 50S ribosomal subunit.

In terms of biological role, one of two assembly initiator proteins, it binds directly to the 5'-end of the 23S rRNA, where it nucleates assembly of the 50S subunit. One of the proteins that surrounds the polypeptide exit tunnel on the outside of the subunit. In Psychromonas ingrahamii (strain DSM 17664 / CCUG 51855 / 37), this protein is Large ribosomal subunit protein uL24.